The following is a 141-amino-acid chain: Hemoglobin subunit alpha (141 aa).

One can recognise a Globin domain in the interval 1–141; it reads VLSPADKTNV…VSTVLTSKYR (141 aa). Position 3 is a phosphoserine (serine 3). The residue at position 7 (lysine 7) is an N6-succinyllysine. Threonine 8 carries the phosphothreonine modification. Lysine 11 bears the N6-succinyllysine mark. Lysine 16 bears the N6-acetyllysine; alternate mark. Lysine 16 carries the post-translational modification N6-succinyllysine; alternate. Residue tyrosine 24 is modified to Phosphotyrosine. Serine 35 bears the Phosphoserine mark. Lysine 40 carries the post-translational modification N6-succinyllysine. Residue serine 49 is modified to Phosphoserine. O2 is bound at residue histidine 58. Histidine 87 is a binding site for heme b. A Phosphoserine modification is found at serine 102. Threonine 108 carries the phosphothreonine modification. Position 124 is a phosphoserine (serine 124). Threonine 134 and threonine 137 each carry phosphothreonine. Phosphoserine is present on serine 138.

Belongs to the globin family. As to quaternary structure, heterotetramer of two alpha chains and two beta chains. Red blood cells.

In terms of biological role, involved in oxygen transport from the lung to the various peripheral tissues. Its function is as follows. Hemopressin acts as an antagonist peptide of the cannabinoid receptor CNR1. Hemopressin-binding efficiently blocks cannabinoid receptor CNR1 and subsequent signaling. This is Hemoglobin subunit alpha (HBA) from Martes foina (Beech marten).